Consider the following 150-residue polypeptide: Catabolic 3-dehydroquinase 2 (150 aa).

Tyrosine 23 functions as the Proton acceptor in the catalytic mechanism. Substrate contacts are provided by asparagine 74, histidine 80, and aspartate 87. Histidine 100 functions as the Proton donor in the catalytic mechanism. Substrate-binding positions include 101–102 (IT) and arginine 111.

It belongs to the type-II 3-dehydroquinase family. Homododecamer. Adopts a ring-like structure, composed of an arrangement of two hexameric rings stacked on top of one another.

It catalyses the reaction 3-dehydroquinate = 3-dehydroshikimate + H2O. The protein operates within aromatic compound metabolism; 3,4-dihydroxybenzoate biosynthesis; 3,4-dihydroxybenzoate from 3-dehydroquinate: step 1/2. Its function is as follows. Is involved in the catabolism of quinate. Allows the utilization of quinate as carbon source via the beta-ketoadipate pathway. The chain is Catabolic 3-dehydroquinase 2 from Aspergillus flavus (strain ATCC 200026 / FGSC A1120 / IAM 13836 / NRRL 3357 / JCM 12722 / SRRC 167).